Reading from the N-terminus, the 334-residue chain is Ornithine carbamoyltransferase (334 aa).

Residues 57-60, Gln-84, Arg-108, and 135-138 contribute to the carbamoyl phosphate site; these read STRT and HPTQ. L-ornithine contacts are provided by residues Asn-169, Asp-233, and 237–238; that span reads SM. Residues 275-276 and Arg-320 contribute to the carbamoyl phosphate site; that span reads CL.

It belongs to the aspartate/ornithine carbamoyltransferase superfamily. OTCase family.

The protein localises to the cytoplasm. It catalyses the reaction carbamoyl phosphate + L-ornithine = L-citrulline + phosphate + H(+). The protein operates within amino-acid biosynthesis; L-arginine biosynthesis; L-arginine from L-ornithine and carbamoyl phosphate: step 1/3. Reversibly catalyzes the transfer of the carbamoyl group from carbamoyl phosphate (CP) to the N(epsilon) atom of ornithine (ORN) to produce L-citrulline. In Vibrio cholerae serotype O1 (strain ATCC 39315 / El Tor Inaba N16961), this protein is Ornithine carbamoyltransferase.